A 1465-amino-acid polypeptide reads, in one-letter code: DNA polymerase III PolC-type (1465 aa).

Residues 427–583 (YVVFDVETTG…YDAEATGRLL (157 aa)) form the Exonuclease domain.

The protein belongs to the DNA polymerase type-C family. PolC subfamily.

It is found in the cytoplasm. It catalyses the reaction DNA(n) + a 2'-deoxyribonucleoside 5'-triphosphate = DNA(n+1) + diphosphate. Its function is as follows. Required for replicative DNA synthesis. This DNA polymerase also exhibits 3' to 5' exonuclease activity. This Streptococcus pyogenes serotype M18 (strain MGAS8232) protein is DNA polymerase III PolC-type.